The sequence spans 92 residues: Protein S100-A5 (92 aa).

EF-hand domains follow at residues 12 to 47 (MVTT…LGEM) and 47 to 82 (MKES…LCMA). Ca(2+) contacts are provided by Thr-28, Glu-33, Asp-60, Asn-62, Asp-64, Glu-66, and Glu-71.

This sequence belongs to the S-100 family. In terms of assembly, homodimer.

In terms of biological role, binds calcium, zinc and copper. One subunit can simultaneously bind 2 calcium ions or 2 copper ions plus 1 zinc ion. Calcium and copper ions compete for the same binding sites. This is Protein S100-A5 (S100A5) from Homo sapiens (Human).